We begin with the raw amino-acid sequence, 569 residues long: Endonuclease/exonuclease/phosphatase family domain-containing protein 1 (569 aa).

Gly-2 carries the N-myristoyl glycine lipid modification. Phosphoserine is present on residues Ser-16 and Ser-25. The 30-residue stretch at 38-67 (ERLNINTATEEELMTLPGVTRAVARSIVEY) folds into the HhH domain. Phosphoserine occurs at positions 106, 110, 160, and 173. The interval 200–224 (SRPPSTHTNGGLTFTAKPHPSPTSL) is disordered. The segment covering 202–211 (PPSTHTNGGL) has biased composition (polar residues). Phosphothreonine is present on Thr-265. The segment at 549–569 (VPRNGNGVTLEPSEANIKHER) is disordered.

The sequence is that of Endonuclease/exonuclease/phosphatase family domain-containing protein 1 (Eepd1) from Mus musculus (Mouse).